We begin with the raw amino-acid sequence, 214 residues long: SH3 domain-binding glutamic acid-rich protein (214 aa).

Residues 61–67 (NGIPLPP) carry the SH3-binding motif. The disordered stretch occupies residues 101–214 (PGSKVTKSEE…EEEAGEGEDS (114 aa)). Over residues 129–144 (GTEKAEKSGENEAQKE) the composition is skewed to basic and acidic residues. Acidic residues-rich tracts occupy residues 162–192 (EGED…EAPE) and 198–214 (EAEE…GEDS).

Belongs to the SH3BGR family.

In Mus musculus (Mouse), this protein is SH3 domain-binding glutamic acid-rich protein (Sh3bgr).